The chain runs to 138 residues: Large ribosomal subunit protein uL16 (138 aa).

Basic residues predominate over residues 1-16; sequence MLIPRRVKHRKQHHPG. Residues 1 to 24 are disordered; sequence MLIPRRVKHRKQHHPGRSGAATGG.

Belongs to the universal ribosomal protein uL16 family. In terms of assembly, part of the 50S ribosomal subunit.

In terms of biological role, binds 23S rRNA and is also seen to make contacts with the A and possibly P site tRNAs. This is Large ribosomal subunit protein uL16 from Paenarthrobacter aurescens (strain TC1).